We begin with the raw amino-acid sequence, 305 residues long: P2Y purinoceptor 14 (305 aa).

Residues 1–29 lie on the Extracellular side of the membrane; it reads MDNTTTTEPPKQPCTRNTLITQQIIPMLY. The N-linked (GlcNAc...) asparagine glycan is linked to Asn-3. A helical membrane pass occupies residues 30 to 50; that stretch reads CVVFITGVLLNGISGWIFFYV. At 51–55 the chain is on the cytoplasmic side; that stretch reads PSSKS. A helical transmembrane segment spans residues 56–76; the sequence is FIIYLKNIVVADFLMGLTFPF. Residues 77–96 are Extracellular-facing; sequence KVLSDSGLGPWQLNVFVFRV. Residues 97-117 traverse the membrane as a helical segment; that stretch reads SAVIFYVNMYVSIAFFGLISF. Over 118 to 139 the chain is Cytoplasmic; the sequence is DRYYKIVKPLLVSIVQSVNYSK. A helical membrane pass occupies residues 140 to 160; sequence VLSVLVWVLMLLLAVPNIILT. Residue Asn-161 is glycosylated (N-linked (GlcNAc...) asparagine). At 161–188 the chain is on the extracellular side; it reads NQSVKDVTNIQCMELKNELGRKWHKASN. Residues 189–209 traverse the membrane as a helical segment; it reads YVFVSIFWIVFLLLTVFYMAI. Residues 210–234 lie on the Cytoplasmic side of the membrane; it reads TRKIFKSHLKSRKNSISVKRKSSRN. The helical transmembrane segment at 235-255 threads the bilayer; it reads IFSIVLAFVACFAPYHVARIP. Topologically, residues 256–278 are extracellular; sequence YTKSQTEGHYSCQAKETLLYTKE. Residues 279 to 299 traverse the membrane as a helical segment; sequence FTLLLSAANVCLDPISISSYA. Topologically, residues 300 to 305 are cytoplasmic; the sequence is SRLEKS.

This sequence belongs to the G-protein coupled receptor 1 family.

The protein resides in the cell membrane. In terms of biological role, receptor for UDP-glucose coupled to G-proteins. The chain is P2Y purinoceptor 14 (P2ry14) from Rattus norvegicus (Rat).